We begin with the raw amino-acid sequence, 706 residues long: Solute carrier organic anion transporter family member 6C1 (706 aa).

Residues 1-24 (MAHVRNKKSDDKKAMVVAKEDTNK) form a disordered region. Over 1-94 (MAHVRNKKSD…PFVQRFNNID (94 aa)) the chain is Cytoplasmic. Basic and acidic residues predominate over residues 7 to 24 (KKSDDKKAMVVAKEDTNK). The helical transmembrane segment at 95–118 (GFMTLYVAAVLIHGALFAVVDMTL) threads the bilayer. Residues 119-130 (NIYQVQFSLTRT) lie on the Extracellular side of the membrane. Residues 131–151 (EWYLMDFSDYIASFVVAIIIA) form a helical membrane-spanning segment. Residues 152–159 (HFGSKGNR) are Cytoplasmic-facing. Residues 160–180 (TRWIAASCILMGLESMLFAFP) form a helical membrane-spanning segment. The Extracellular portion of the chain corresponds to 181–218 (FFTYEIIIPGRQSIELCMEENEKRNIICGNSVPNRSKC). Asn-214 carries N-linked (GlcNAc...) asparagine glycosylation. A helical membrane pass occupies residues 219-241 (IYFHIAGQCIHGIAGMPIYILGI). The Cytoplasmic segment spans residues 242–253 (TFIFDHIPTSSC). Residues 254–277 (GFYLAIGHSAYLIGYLLGMVGGLQ) form a helical membrane-spanning segment. Over 278–301 (NFQPPPKEKTVEIEPAKVYQLLQS) the chain is Extracellular. The chain crosses the membrane as a helical span at residues 302-324 (GWWKTFLIIAAISFCVSFMMVCF). Topologically, residues 325-374 (PTSLPGAHKLRLAKRKEPPTIDRRLKDMKIQPHLKGFLHNIWHILKNPLM) are cytoplasmic. The helical transmembrane segment at 375-396 (LTQAICKVSEYLTFNTSLYFLP) threads the bilayer. Over 397–410 (HHLQTQFLITPGIA) the chain is Extracellular. Residues 411 to 432 (SLLTGAFVLPGGIIGHFLGGLI) traverse the membrane as a helical segment. The Cytoplasmic segment spans residues 433–445 (VDRLEMTNKNKLK). A helical membrane pass occupies residues 446–466 (FTLVTTVVSVGLFLLIFFVEC). Residues 467 to 565 (QTTTFAGINE…IAGTCDSDCL (99 aa)) are Extracellular-facing. A Kazal-like domain is found at 485 to 540 (GNLTADCNEYCDCTTSLYTSICGRDEKEYFSPCFAGCKATKVSQTEKTYYNCSCIK). The N-linked (GlcNAc...) asparagine glycan is linked to Asn-486. 3 cysteine pairs are disulfide-bonded: Cys-491–Cys-521, Cys-497–Cys-517, and Cys-506–Cys-538. Asn-535 carries N-linked (GlcNAc...) asparagine glycosylation. Residues 566-589 (KLPLFFAFYFSATVFSNMCSIPVI) form a helical membrane-spanning segment. Topologically, residues 590–604 (SIILQSVPANFTSLS) are cytoplasmic. A helical transmembrane segment spans residues 605 to 624 (LGVTYAIVKFVASVPAPLLF). Residues 625 to 652 (RLSSAIACIYWDNNRCGGKERCWIYNKN) lie on the Extracellular side of the membrane. The helical transmembrane segment at 653–675 (ILVYEFMGIWMSSQLIIVLLNIY) threads the bilayer. At 676–706 (AIQIHDVVVHGEITESKTTVKDVKEQKERKA) the chain is on the cytoplasmic side.

The protein belongs to the organo anion transporter (TC 2.A.60) family. As to quaternary structure, component of the CatSper complex or CatSpermasome composed of the core pore-forming members CATSPER1, CATSPER2, CATSPER3 and CATSPER4 as well as auxiliary members CATSPERB, CATSPERG2, CATSPERD, CATSPERE, CATSPERZ, C2CD6/CATSPERT, SLCO6C1, TMEM249, TMEM262 and EFCAB9. HSPA1 may be an additional auxiliary complex member. The core complex members CATSPER1, CATSPER2, CATSPER3 and CATSPER4 form a heterotetrameric channel. The auxiliary CATSPERB, CATSPERG2, CATSPERD and CATSPERE subunits form a pavilion-like structure over the pore which stabilizes the complex through interactions with CATSPER4, CATSPER3, CATSPER1 and CATSPER2 respectively. SLCO6C1 interacts with CATSPERE and TMEM262/CATSPERH interacts with CATSPERB, further stabilizing the complex. C2CD6/CATSPERT interacts at least with CATSPERD and is required for targeting the CatSper complex in the flagellar membrane.

It is found in the cell projection. The protein resides in the cilium. The protein localises to the flagellum membrane. Its function is as follows. Auxiliary component of the CatSper complex, a complex involved in sperm cell hyperactivation. In Mus musculus (Mouse), this protein is Solute carrier organic anion transporter family member 6C1.